Here is a 231-residue protein sequence, read N- to C-terminus: DNA repair protein RecO (231 aa).

The protein belongs to the RecO family.

Functionally, involved in DNA repair and RecF pathway recombination. This Coxiella burnetii (strain CbuK_Q154) (Coxiella burnetii (strain Q154)) protein is DNA repair protein RecO.